The sequence spans 142 residues: Small ribosomal subunit protein uS11c (142 aa).

It belongs to the universal ribosomal protein uS11 family. As to quaternary structure, part of the 30S ribosomal subunit.

Its subcellular location is the plastid. The protein localises to the chloroplast. The protein is Small ribosomal subunit protein uS11c of Welwitschia mirabilis (Tree tumbo).